The primary structure comprises 417 residues: Serine hydroxymethyltransferase (417 aa).

(6S)-5,6,7,8-tetrahydrofolate contacts are provided by residues Leu121 and 125–127; that span reads GHL. Lys229 is subject to N6-(pyridoxal phosphate)lysine. 355–357 is a (6S)-5,6,7,8-tetrahydrofolate binding site; it reads SPF.

The protein belongs to the SHMT family. Homodimer. The cofactor is pyridoxal 5'-phosphate.

It localises to the cytoplasm. It carries out the reaction (6R)-5,10-methylene-5,6,7,8-tetrahydrofolate + glycine + H2O = (6S)-5,6,7,8-tetrahydrofolate + L-serine. It functions in the pathway one-carbon metabolism; tetrahydrofolate interconversion. The protein operates within amino-acid biosynthesis; glycine biosynthesis; glycine from L-serine: step 1/1. Functionally, catalyzes the reversible interconversion of serine and glycine with tetrahydrofolate (THF) serving as the one-carbon carrier. This reaction serves as the major source of one-carbon groups required for the biosynthesis of purines, thymidylate, methionine, and other important biomolecules. Also exhibits THF-independent aldolase activity toward beta-hydroxyamino acids, producing glycine and aldehydes, via a retro-aldol mechanism. The chain is Serine hydroxymethyltransferase from Shewanella sp. (strain MR-4).